The chain runs to 1331 residues: X-linked retinitis pigmentosa GTPase regulator-interacting protein 1 (1331 aa).

Disordered stretches follow at residues Met1 to Phe165, Ser183 to Cys220, and His351 to Gln374. The span at Asn41 to Arg67 shows a compositional bias: basic and acidic residues. 2 stretches are compositionally biased toward polar residues: residues Val77–Asp86 and Ser183–Ser193. A compositionally biased stretch (basic and acidic residues) spans Thr194 to Cys220. Coiled coils occupy residues Glu236–Gln352 and Met498–His546. Residues His351–Thr367 show a composition bias toward polar residues. Positions Gly745–Phe870 constitute a C2 domain. Disordered regions lie at residues Phe899–Lys1057 and Ala1088–Ile1146. Residues Glu908–Glu999 are a coiled coil. The segment covering Glu910–Asn988 has biased composition (acidic residues). 2 stretches are compositionally biased toward basic and acidic residues: residues Pro1022 to Gln1039 and Ala1088 to Ser1115. Over residues Cys1129–Thr1141 the composition is skewed to polar residues. Residues Ser1136 to Thr1326 are interaction with RPGR.

The protein belongs to the RPGRIP1 family. Interacts with NPHP4. Interacts with NEK4. Forms homodimers and elongated homopolymers. Interacts with RPGR. Interacts with SPATA7. Interacts with CEP290/NPHP6; mediating the association between RPGR and CEP290/NPHP6. Expressed in the retina (at protein level).

It localises to the cell projection. The protein localises to the cilium. In terms of biological role, may function as scaffolding protein. Required for normal location of RPGR at the connecting cilium of photoreceptor cells. Required for normal disk morphogenesis and disk organization in the outer segment of photoreceptor cells and for survival of photoreceptor cells. The polypeptide is X-linked retinitis pigmentosa GTPase regulator-interacting protein 1 (Rpgrip1) (Mus musculus (Mouse)).